The sequence spans 272 residues: tRNA pseudouridine synthase A (272 aa).

Catalysis depends on Asp62, which acts as the Nucleophile. Substrate is bound at residue Tyr120.

Belongs to the tRNA pseudouridine synthase TruA family. As to quaternary structure, homodimer.

The enzyme catalyses uridine(38/39/40) in tRNA = pseudouridine(38/39/40) in tRNA. Its function is as follows. Formation of pseudouridine at positions 38, 39 and 40 in the anticodon stem and loop of transfer RNAs. The polypeptide is tRNA pseudouridine synthase A (Nitrosomonas europaea (strain ATCC 19718 / CIP 103999 / KCTC 2705 / NBRC 14298)).